A 491-amino-acid polypeptide reads, in one-letter code: MNTQQLAKLRSIVPEMRRVRHIHFVGIGGAGMGGIAEVLANEGYQISGSDLAPNPVTQQLTSLGATIFFNHRPENVRDASVVVVSSAISADNPEIVAAHEARIPVIRRAEMLAELMRFRHGIAIAGTHGKTTTTAMVSSIYAEAGLDPTFVNGGLVKAAGVHARLGHSRYLIAEADESDASFLHLQPMVAIVTNIEADHMDTYHGDFENLKQTFINFLHNLPFYGRAVMCVDDPVIRELLPRVGRQTTTYGFSEDADVRVEDYQQIGSQGHFTLLRQGMPDLHVTLNAPGRHNALNAAAAVAVATEEGIDDDAILRALESFQGTGRRFDFLGEFPLEPVNGKAGTAMLVDDYGHHPTEVDATIKAARAGWPDKKLVMLFQPHRYTRTRDLYDDFANVLTQVDALLMLDVYPAGEAPIPGADSRSLCRTIRNRGKIDPILVSDPAQVATMLAPVLTGNDLILVQGAGNVGKIARYLSEIKLKPQIQEEEQHG.

ATP is bound at residue 126–132; that stretch reads GTHGKTT.

The protein belongs to the MurCDEF family.

The protein resides in the cytoplasm. It carries out the reaction UDP-N-acetyl-alpha-D-muramate + L-alanine + ATP = UDP-N-acetyl-alpha-D-muramoyl-L-alanine + ADP + phosphate + H(+). Its pathway is cell wall biogenesis; peptidoglycan biosynthesis. In terms of biological role, cell wall formation. This Salmonella choleraesuis (strain SC-B67) protein is UDP-N-acetylmuramate--L-alanine ligase.